Here is a 147-residue protein sequence, read N- to C-terminus: Endothelial differentiation-related factor 1 homolog (147 aa).

Positions 1–69 are disordered; that stretch reads MAESDWDTVT…KLDRETEELH (69 aa). The segment covering 33–42 has biased composition (basic and acidic residues); sequence RRGEEVETSK. Residues 46 to 58 are compositionally biased toward polar residues; that stretch reads AGQNKQHTITRNT. Residues 59-69 show a composition bias toward basic and acidic residues; the sequence is AKLDRETEELH. An HTH cro/C1-type domain is found at 81-135; that stretch reads IQQGRQGKGMTQKDLATKINEKPQVIADYECGKAIPNNQVMGKIERVIGLKLRGK. A DNA-binding region (H-T-H motif) is located at residues 92 to 111; it reads QKDLATKINEKPQVIADYEC.

The protein localises to the nucleus. In terms of biological role, probable transcriptional coactivator. This chain is Endothelial differentiation-related factor 1 homolog (edf1), found in Xenopus laevis (African clawed frog).